A 264-amino-acid chain; its full sequence is Small ribosomal subunit protein uS3 (264 aa).

In terms of domain architecture, KH type-2 spans 39-107; the sequence is VREYLKKKLK…PVHVNIEEIR (69 aa). Residues 214–264 are disordered; the sequence is PVETAAPREEERRPRRAPRGDRPDGARNGRPGGGRGRAPRKADAAPAPEGE. Over residues 219 to 240 the composition is skewed to basic and acidic residues; that stretch reads APREEERRPRRAPRGDRPDGAR.

Belongs to the universal ribosomal protein uS3 family. Part of the 30S ribosomal subunit. Forms a tight complex with proteins S10 and S14.

Binds the lower part of the 30S subunit head. Binds mRNA in the 70S ribosome, positioning it for translation. This Bordetella avium (strain 197N) protein is Small ribosomal subunit protein uS3.